Consider the following 225-residue polypeptide: Insulin-induced gene 2 protein (225 aa).

Residues 1–28 are Cytoplasmic-facing; the sequence is MAEGETESPGPKKCGPYISSVTSQSVNL. The helical transmembrane segment at 29–51 threads the bilayer; sequence MIRGVVLFFIGVFLALVLNLLQI. Topologically, residues 52–70 are lumenal; it reads QRNVTLFPPDVIASIFSSA. A helical membrane pass occupies residues 71–88; that stretch reads WWVPPCCGTASAVIGLLY. Over 89-103 the chain is Cytoplasmic; sequence PCIDRHLGEPHKFKR. Residues 104 to 126 traverse the membrane as a helical segment; the sequence is EWSSVMRCVAVFVGINHASAKVD. Over 127–129 the chain is Lumenal; that stretch reads FDN. Residues 130-148 form a helical membrane-spanning segment; that stretch reads NIQLSLTLAALSIGLWWTF. Over 149-153 the chain is Cytoplasmic; sequence DRSRS. At Ser151 the chain carries Phosphoserine. Residues 154–175 form a helical membrane-spanning segment; that stretch reads GFGLGVGIAFLATLVTQLLVYN. Residues 176–189 lie on the Lumenal side of the membrane; it reads GVYQYTSPDFLYVR. Residues 190-207 traverse the membrane as a helical segment; the sequence is SWLPCIFFAGGITMGNIG. The Cytoplasmic portion of the chain corresponds to 208–225; that stretch reads RQLAMYECKVIAEKSHQE. Cys215 bears the Cysteine sulfenic acid (-SOH); alternate mark. Residue Cys215 forms a Glycyl cysteine thioester (Cys-Gly) (interchain with G-Cter in ubiquitin); alternate linkage. Positions 219–225 match the KxHxx motif; it reads AEKSHQE.

The protein belongs to the INSIG family. In terms of assembly, interacts with SCAP; interaction is direct and only takes place in the presence of sterols; it prevents interaction between SCAP and the coat protein complex II (COPII). Associates with the SCAP-SREBP complex (composed of SCAP and SREBF1/SREBP1 or SREBF2/SREBP2); association is mediated via its interaction with SCAP and only takes place in the presence of sterols. Interacts with RNF139. Interacts with RNF145. Phosphorylation at Ser-151 by PCK1 reduces binding to oxysterol, disrupting the interaction between INSIG2 and SCAP, thereby promoting nuclear translocation of SREBP proteins (SREBF1/SREBP1 or SREBF2/SREBP2) and subsequent transcription of downstream lipogenesis-related genes. In terms of processing, polyubiquitinated by AMFR/gp78 at Cys-215 in some tissues such as adipose tissues, undifferentiated myoblasts and liver, leading to its degradation. In differentiated myotubes, Cys-215 oxidation prevents ubiquitination at the same site, resulting in protein stabilization. Post-translationally, oxidized at Cys-215 in differentiated myotubes, preventing ubiquitination at the same site, and resulting in protein stabilization.

Its subcellular location is the endoplasmic reticulum membrane. Functionally, oxysterol-binding protein that mediates feedback control of cholesterol synthesis by controlling both endoplasmic reticulum to Golgi transport of SCAP and degradation of HMGCR. Acts as a negative regulator of cholesterol biosynthesis by mediating the retention of the SCAP-SREBP complex in the endoplasmic reticulum, thereby blocking the processing of sterol regulatory element-binding proteins (SREBPs) SREBF1/SREBP1 and SREBF2/SREBP2. Binds oxysterol, including 22-hydroxycholesterol, 24-hydroxycholesterol, 25-hydroxycholesterol and 27-hydroxycholesterol, regulating interaction with SCAP and retention of the SCAP-SREBP complex in the endoplasmic reticulum. In presence of oxysterol, interacts with SCAP, retaining the SCAP-SREBP complex in the endoplasmic reticulum, thereby preventing SCAP from escorting SREBF1/SREBP1 and SREBF2/SREBP2 to the Golgi. Sterol deprivation or phosphorylation by PCK1 reduce oxysterol-binding, disrupting the interaction between INSIG2 and SCAP, thereby promoting Golgi transport of the SCAP-SREBP complex, followed by processing and nuclear translocation of SREBF1/SREBP1 and SREBF2/SREBP2. Also regulates cholesterol synthesis by regulating degradation of HMGCR: initiates the sterol-mediated ubiquitin-mediated endoplasmic reticulum-associated degradation (ERAD) of HMGCR via recruitment of the reductase to the ubiquitin ligase RNF139. The polypeptide is Insulin-induced gene 2 protein (Papio anubis (Olive baboon)).